The chain runs to 257 residues: 4-hydroxy-tetrahydrodipicolinate reductase (257 aa).

NAD(+) is bound by residues 8–13 (GSTGRV), 90–92 (ATT), and 114–117 (ATNM). H146 functions as the Proton donor/acceptor in the catalytic mechanism. H147 serves as a coordination point for (S)-2,3,4,5-tetrahydrodipicolinate. K150 serves as the catalytic Proton donor. 156-157 (GT) is a (S)-2,3,4,5-tetrahydrodipicolinate binding site.

The protein belongs to the DapB family.

The protein localises to the cytoplasm. The catalysed reaction is (S)-2,3,4,5-tetrahydrodipicolinate + NAD(+) + H2O = (2S,4S)-4-hydroxy-2,3,4,5-tetrahydrodipicolinate + NADH + H(+). The enzyme catalyses (S)-2,3,4,5-tetrahydrodipicolinate + NADP(+) + H2O = (2S,4S)-4-hydroxy-2,3,4,5-tetrahydrodipicolinate + NADPH + H(+). It participates in amino-acid biosynthesis; L-lysine biosynthesis via DAP pathway; (S)-tetrahydrodipicolinate from L-aspartate: step 4/4. Catalyzes the conversion of 4-hydroxy-tetrahydrodipicolinate (HTPA) to tetrahydrodipicolinate. The protein is 4-hydroxy-tetrahydrodipicolinate reductase of Aliarcobacter butzleri (strain RM4018) (Arcobacter butzleri).